Here is a 119-residue protein sequence, read N- to C-terminus: Large ribosomal subunit protein bL17 (119 aa).

This sequence belongs to the bacterial ribosomal protein bL17 family. As to quaternary structure, part of the 50S ribosomal subunit. Contacts protein L32.

In Psychrobacter sp. (strain PRwf-1), this protein is Large ribosomal subunit protein bL17.